We begin with the raw amino-acid sequence, 81 residues long: Photosystem I iron-sulfur center (81 aa).

4Fe-4S ferredoxin-type domains follow at residues 2-31 (SHSV…MVPW) and 39-68 (IAAS…IRVY). [4Fe-4S] cluster is bound by residues Cys11, Cys14, Cys17, Cys21, Cys48, Cys51, Cys54, and Cys58.

As to quaternary structure, the cyanobacterial PSI reaction center is composed of one copy each of PsaA,B,C,D,E,F,I,J,K,L,M and X, and forms trimeric complexes. The cofactor is [4Fe-4S] cluster.

Its subcellular location is the cellular thylakoid membrane. The enzyme catalyses reduced [plastocyanin] + hnu + oxidized [2Fe-2S]-[ferredoxin] = oxidized [plastocyanin] + reduced [2Fe-2S]-[ferredoxin]. Apoprotein for the two 4Fe-4S centers FA and FB of photosystem I (PSI); essential for photochemical activity. FB is the terminal electron acceptor of PSI, donating electrons to ferredoxin. The C-terminus interacts with PsaA/B/D and helps assemble the protein into the PSI complex. Required for binding of PsaD and PsaE to PSI. PSI is a plastocyanin/cytochrome c6-ferredoxin oxidoreductase, converting photonic excitation into a charge separation, which transfers an electron from the donor P700 chlorophyll pair to the spectroscopically characterized acceptors A0, A1, FX, FA and FB in turn. The polypeptide is Photosystem I iron-sulfur center (Synechococcus elongatus (strain ATCC 33912 / PCC 7942 / FACHB-805) (Anacystis nidulans R2)).